A 157-amino-acid chain; its full sequence is Protein Smg homolog (157 aa).

This sequence belongs to the Smg family.

The protein is Protein Smg homolog of Stenotrophomonas maltophilia (strain R551-3).